A 617-amino-acid chain; its full sequence is V-type proton ATPase catalytic subunit A (617 aa).

Residue T136 is modified to Phosphothreonine. 250–257 (GAFGCGKT) serves as a coordination point for ATP. S384 is modified (phosphoserine; by AMPK).

This sequence belongs to the ATPase alpha/beta chains family. In terms of assembly, V-ATPase is a heteromultimeric enzyme made up of two complexes: the ATP-hydrolytic V1 complex and the proton translocation V0 complex. The V1 complex consists of three catalytic AB heterodimers that form a heterohexamer, three peripheral stalks each consisting of EG heterodimers, one central rotor including subunits D and F, and the regulatory subunits C and H. The proton translocation complex V0 consists of the proton transport subunit a, a ring of proteolipid subunits c9c'', rotary subunit d, subunits e and f, and the accessory subunits ATP6AP1/Ac45 and ATP6AP2/PRR. Interacts with the V0 complex V-ATPase subunit a4 ATP6V0A4. Interacts with WFS1. Interacts with alpha-crystallin B chain/CRYAB and with MTOR, forming a ternary complex. Phosphorylation at Ser-384 by AMPK down-regulates its enzyme activity.

It is found in the cytoplasm. The protein resides in the cytosol. The protein localises to the cytoplasmic vesicle. It localises to the secretory vesicle. Its subcellular location is the clathrin-coated vesicle membrane. It is found in the lysosome. It catalyses the reaction ATP + H2O + 4 H(+)(in) = ADP + phosphate + 5 H(+)(out). ATP hydrolysis occurs at the interface between the nucleotide-binding domains of subunits A and B. ATP hydrolysis triggers a conformational change in the subunits D and F, which induces a shift of subunit d. The c-ring is subsequently rotated and results in a continuous proton translocation across the membrane. Its function is as follows. Catalytic subunit of the V1 complex of vacuolar(H+)-ATPase (V-ATPase), a multisubunit enzyme composed of a peripheral complex (V1) that hydrolyzes ATP and a membrane integral complex (V0) that translocates protons. V-ATPase is responsible for acidifying and maintaining the pH of intracellular compartments and in some cell types, is targeted to the plasma membrane, where it is responsible for acidifying the extracellular environment. In aerobic conditions, involved in intracellular iron homeostasis, thus triggering the activity of Fe(2+) prolyl hydroxylase (PHD) enzymes, and leading to HIF1A hydroxylation and subsequent proteasomal degradation. May play a role in neurite development and synaptic connectivity. This is V-type proton ATPase catalytic subunit A (ATP6V1A) from Pongo abelii (Sumatran orangutan).